The primary structure comprises 242 residues: MSKGRFTPLASLRRLLLRILVVLAVFWGGGIALFSVVPVPFSAVMVERQISAWLQGDFGYVAHSDWAGMDAISPWMGLAVIAAEDQKFPEHWGFDVSAIEKALAHNERNENRIRGASTLSQQTAKNLFLWDGRSWLRKGLEAGLTVGLETVWSKKRILTVYLNIAEFGDGVFGVEAASQRYFNKPASRLSMSEAALLAAVLPNPLRFKANAPSGYVRSRQAWILRQMRQLGGESFMTRNHLY.

A helical transmembrane segment spans residues 19-39 (ILVVLAVFWGGGIALFSVVPV).

Belongs to the glycosyltransferase 51 family.

The protein resides in the cell inner membrane. The catalysed reaction is [GlcNAc-(1-&gt;4)-Mur2Ac(oyl-L-Ala-gamma-D-Glu-L-Lys-D-Ala-D-Ala)](n)-di-trans,octa-cis-undecaprenyl diphosphate + beta-D-GlcNAc-(1-&gt;4)-Mur2Ac(oyl-L-Ala-gamma-D-Glu-L-Lys-D-Ala-D-Ala)-di-trans,octa-cis-undecaprenyl diphosphate = [GlcNAc-(1-&gt;4)-Mur2Ac(oyl-L-Ala-gamma-D-Glu-L-Lys-D-Ala-D-Ala)](n+1)-di-trans,octa-cis-undecaprenyl diphosphate + di-trans,octa-cis-undecaprenyl diphosphate + H(+). The protein operates within cell wall biogenesis; peptidoglycan biosynthesis. Functionally, peptidoglycan polymerase that catalyzes glycan chain elongation from lipid-linked precursors. This chain is Biosynthetic peptidoglycan transglycosylase, found in Citrobacter koseri (strain ATCC BAA-895 / CDC 4225-83 / SGSC4696).